The primary structure comprises 443 residues: Xaa-Pro dipeptidase (443 aa).

Mn(2+) is bound by residues Asp-244, Asp-255, His-339, Glu-384, and Glu-423.

This sequence belongs to the peptidase M24B family. Bacterial-type prolidase subfamily. Mn(2+) serves as cofactor.

It carries out the reaction Xaa-L-Pro dipeptide + H2O = an L-alpha-amino acid + L-proline. Splits dipeptides with a prolyl residue in the C-terminal position. This is Xaa-Pro dipeptidase from Pseudoalteromonas atlantica (strain T6c / ATCC BAA-1087).